Reading from the N-terminus, the 250-residue chain is Phosphoribosylaminoimidazole-succinocarboxamide synthase (250 aa).

Belongs to the SAICAR synthetase family.

The catalysed reaction is 5-amino-1-(5-phospho-D-ribosyl)imidazole-4-carboxylate + L-aspartate + ATP = (2S)-2-[5-amino-1-(5-phospho-beta-D-ribosyl)imidazole-4-carboxamido]succinate + ADP + phosphate + 2 H(+). It functions in the pathway purine metabolism; IMP biosynthesis via de novo pathway; 5-amino-1-(5-phospho-D-ribosyl)imidazole-4-carboxamide from 5-amino-1-(5-phospho-D-ribosyl)imidazole-4-carboxylate: step 1/2. The chain is Phosphoribosylaminoimidazole-succinocarboxamide synthase from Synechococcus sp. (strain CC9605).